An 88-amino-acid polypeptide reads, in one-letter code: Putative defensin-like protein 256 (88 aa).

Positions methionine 1–alanine 25 are cleaved as a signal peptide. 3 disulfides stabilise this stretch: cysteine 30/cysteine 46, cysteine 36/cysteine 53, and cysteine 40/cysteine 55.

The protein belongs to the DEFL family.

Its subcellular location is the secreted. The protein is Putative defensin-like protein 256 of Arabidopsis thaliana (Mouse-ear cress).